The sequence spans 230 residues: Enolase-phosphatase E1 (230 aa).

It belongs to the HAD-like hydrolase superfamily. MasA/MtnC family. Monomer. Requires Mg(2+) as cofactor.

The enzyme catalyses 5-methylsulfanyl-2,3-dioxopentyl phosphate + H2O = 1,2-dihydroxy-5-(methylsulfanyl)pent-1-en-3-one + phosphate. It participates in amino-acid biosynthesis; L-methionine biosynthesis via salvage pathway; L-methionine from S-methyl-5-thio-alpha-D-ribose 1-phosphate: step 3/6. Its pathway is amino-acid biosynthesis; L-methionine biosynthesis via salvage pathway; L-methionine from S-methyl-5-thio-alpha-D-ribose 1-phosphate: step 4/6. Functionally, bifunctional enzyme that catalyzes the enolization of 2,3-diketo-5-methylthiopentyl-1-phosphate (DK-MTP-1-P) into the intermediate 2-hydroxy-3-keto-5-methylthiopentenyl-1-phosphate (HK-MTPenyl-1-P), which is then dephosphorylated to form the acireductone 1,2-dihydroxy-3-keto-5-methylthiopentene (DHK-MTPene). This Marinobacter nauticus (strain ATCC 700491 / DSM 11845 / VT8) (Marinobacter aquaeolei) protein is Enolase-phosphatase E1.